The chain runs to 155 residues: SsrA-binding protein (155 aa).

Belongs to the SmpB family.

The protein localises to the cytoplasm. Its function is as follows. Required for rescue of stalled ribosomes mediated by trans-translation. Binds to transfer-messenger RNA (tmRNA), required for stable association of tmRNA with ribosomes. tmRNA and SmpB together mimic tRNA shape, replacing the anticodon stem-loop with SmpB. tmRNA is encoded by the ssrA gene; the 2 termini fold to resemble tRNA(Ala) and it encodes a 'tag peptide', a short internal open reading frame. During trans-translation Ala-aminoacylated tmRNA acts like a tRNA, entering the A-site of stalled ribosomes, displacing the stalled mRNA. The ribosome then switches to translate the ORF on the tmRNA; the nascent peptide is terminated with the 'tag peptide' encoded by the tmRNA and targeted for degradation. The ribosome is freed to recommence translation, which seems to be the essential function of trans-translation. In Streptococcus pyogenes serotype M18 (strain MGAS8232), this protein is SsrA-binding protein.